We begin with the raw amino-acid sequence, 838 residues long: Protein translocase subunit SecA (838 aa).

Residues glutamine 85, 103–107 (GEGKT), and aspartate 493 each bind ATP. 4 residues coordinate Zn(2+): cysteine 823, cysteine 825, cysteine 834, and histidine 835.

The protein belongs to the SecA family. As to quaternary structure, monomer and homodimer. Part of the essential Sec protein translocation apparatus which comprises SecA, SecYEG and auxiliary proteins SecDF. Other proteins may also be involved. Zn(2+) is required as a cofactor.

Its subcellular location is the cell membrane. The protein resides in the cytoplasm. It catalyses the reaction ATP + H2O + cellular proteinSide 1 = ADP + phosphate + cellular proteinSide 2.. Its function is as follows. Part of the Sec protein translocase complex. Interacts with the SecYEG preprotein conducting channel. Has a central role in coupling the hydrolysis of ATP to the transfer of proteins into and across the cell membrane, serving as an ATP-driven molecular motor driving the stepwise translocation of polypeptide chains across the membrane. The chain is Protein translocase subunit SecA from Streptococcus gordonii (strain Challis / ATCC 35105 / BCRC 15272 / CH1 / DL1 / V288).